Here is a 355-residue protein sequence, read N- to C-terminus: cGAMP-activated phospholipase (355 aa).

Residues 17–214 enclose the PNPLA domain; the sequence is LSLNGGGARG…VANNPSFIGL (198 aa). The GXGXXG motif lies at 21–26; the sequence is GGGARG. Positions 60-64 match the GXSXG motif; that stretch reads GTSIG. Catalysis depends on Ser62, which acts as the Nucleophile. The active-site Proton acceptor is Asp201. Residues 201 to 203 carry the DGA/G motif; the sequence is DGG.

This sequence belongs to the patatin family.

The catalysed reaction is a 1,2-diacyl-sn-glycero-3-phosphocholine + H2O = a 2-acyl-sn-glycero-3-phosphocholine + a fatty acid + H(+). It carries out the reaction 1,2-di-(9Z-octadecenoyl)-sn-glycero-3-phosphoethanolamine + 2 H2O = sn-glycero-3-phosphoethanolamine + 2 (9Z)-octadecenoate + 2 H(+). With respect to regulation, phospholipase activity is specifically activated upon 3',3'-cGAMP (cGAMP) binding. Is not activated by the other cyclic dinucleotides 3',3'-cUAMP, 3',3'-c-diAMP and 3',3'-c-diGMP. Therefore, is specifically activated by only the nucleotide synthesized from its adjacently encoded nucleotidyltransferase (DncV). The cGAMP-activation of lipase is inhibited by T4 phage protein Acb2 (Vs.4). Effector phospholipase of a CBASS antiviral system. CBASS (cyclic oligonucleotide-based antiphage signaling system) provides immunity against bacteriophages. The CD-NTase protein (DncV) synthesizes cyclic nucleotides in response to infection; these serve as specific second messenger signals. The signals activate a diverse range of effectors, leading to bacterial cell death and thus abortive phage infection. A type II-A(GA) CBASS system. Functionally, phospholipase that is activated upon binding to the cyclic dinucleotide (CDN) second messenger 3',3'-cyclic GMP-AMP (3',3'-cGAMP). Then degrades phosphatidylethanolamine (PE) and phosphatidylglycerol (PG), the major phospholipids in the cell membrane of V.cholerae, releasing 16:1 and 18:1 free fatty acids. Upon expression in E.coli with cognate DncV, the cell inner membrane shrinks and separates from the cell wall. In terms of biological role, protects E.coli against phage infection. When the CBASS operon (capV-dncV-cap2-cap3) is introduced in E.coli MG1655 there is about 100-fold protection against phages P1 and T2. When the operon is introduced in E.coli MG1655 there is a more than 10(3) decrease in the efficiency of T2 plaque formation. Protects 100-fold against phage T5, offers no protection against T7. When the operon is introduced in E.coli MG1655 it protects against phages T2, T4, T5 and T6. Another paper shows the operon confers protection against phages P1, T2, T5 and T6 but not T4 or lambda. In Vibrio cholerae serotype O1 (strain ATCC 39315 / El Tor Inaba N16961), this protein is cGAMP-activated phospholipase.